The sequence spans 570 residues: MAFRGWRPPPPPLLLLLLWVTGQAAPVAGLGSDAELQIERRFVPDECPRTVRSGDFVRYHYVGTFPDGQKFDSSYDRDSTFNVFVGKGQLITGMDQALVGMCVNERRFVKIPPKLAYGNEGVSGVIPPNSVLHFDVLLMDIWNSEDQVQIHTYFKPPSCPRTIQVSDFVRYHYNGTFLDGTLFDSSHNRMKTYDTYVGIGWLIPGMDKGLLGMCVGEKRIITIPPFLAYGEDGDGKDIPGQASLVFDVALLDLHNPKDSISIENKVVPENCERISQSGDFLRYHYNGTLLDGTLFDSSYSRNRTFDTYIGQGYVIPGMDEGLLGVCIGEKRRIVVPPHLGYGEEGRGNIPGSAVLVFDIHVIDFHNPSDSISITSHYKPPDCSVLSKKGDYLKYHYNASLLDGTLLDSTWNLGKTYNIVLGSGQVVLGMDMGLREMCVGEKRTVIIPPHLGYGEAGVDGEVPGSAVLVFDIELLELVAGLPEGYMFIWNGEVSPNLFEEIDKDGNGEVLLEEFSEYIHAQVASGKGKLAPGFDAELIVKNMFTNQDRNGDGKVTAEEFKLKDQEAKHDEL.

Residues 1-24 (MAFRGWRPPPPPLLLLLLWVTGQA) form the signal peptide. PPIase FKBP-type domains lie at 54–142 (GDFV…MDIW), 166–254 (SDFV…LDLH), 278–365 (GDFL…IDFH), and 389–477 (GDYL…LELV). N-linked (GlcNAc...) asparagine glycans are attached at residues N174, N286, N302, and N397. EF-hand domains follow at residues 488–523 (WNGE…QVAS) and 533–568 (DAEL…AKHD). Ca(2+) is bound by residues D501, D503, N505, E507, E512, D546, N548, D550, K552, and E557. The Prevents secretion from ER motif lies at 567–570 (HDEL).

Post-translationally, phosphorylated.

The protein localises to the endoplasmic reticulum. It carries out the reaction [protein]-peptidylproline (omega=180) = [protein]-peptidylproline (omega=0). Inhibited by FK506. PPIases accelerate the folding of proteins during protein synthesis. In Homo sapiens (Human), this protein is Peptidyl-prolyl cis-trans isomerase FKBP9 (FKBP9).